A 124-amino-acid polypeptide reads, in one-letter code: UPF0102 protein tll1737 (124 aa).

This sequence belongs to the UPF0102 family.

This Thermosynechococcus vestitus (strain NIES-2133 / IAM M-273 / BP-1) protein is UPF0102 protein tll1737.